We begin with the raw amino-acid sequence, 440 residues long: Thymidine phosphorylase (440 aa).

It belongs to the thymidine/pyrimidine-nucleoside phosphorylase family. Homodimer.

It carries out the reaction thymidine + phosphate = 2-deoxy-alpha-D-ribose 1-phosphate + thymine. Its pathway is pyrimidine metabolism; dTMP biosynthesis via salvage pathway; dTMP from thymine: step 1/2. Functionally, the enzymes which catalyze the reversible phosphorolysis of pyrimidine nucleosides are involved in the degradation of these compounds and in their utilization as carbon and energy sources, or in the rescue of pyrimidine bases for nucleotide synthesis. The sequence is that of Thymidine phosphorylase from Shigella flexneri serotype 5b (strain 8401).